The sequence spans 456 residues: MSQPPGTNIFTVSRLNSTVRKLLEMEMGQVWLSAEISNFSQPSSGHWYFTLKDDTAQVRCAMFRNGNRRVTFRPQNGQQVLVRATITLYEPRGDYQLIAESMQPAGDGLLQQQFDQLKQRLMAEGLFEQAHKQPLPDPARQVGVITSSSGAALHDVLRVLQRRDPSLPVVIYPTPVQGAEAPTGIVRAIELANARKECDVLIVGRGGGSLEDLWSFNDERVARAIFASRIPIVSAVGHETDVTIADFVADLRAPTPSAAAELVSRDQIERLRQLQQQQQRMEMAMDYYLARQQSTFTRLQHRLQQQHPQLRLARQQTALMKVQRRLDDALQQHLRQATRRQEQLGQRLNAFRPEMRIERASQQLQQWQYRLRQAMQQRLGTGKQHFGQLAARLEGVSPLATLARGFSVTSTAEGQVVKKTGQLHQGDTLKTRLDDGWIESEVTAITPLKKTRRRST.

The protein belongs to the XseA family. In terms of assembly, heterooligomer composed of large and small subunits.

It localises to the cytoplasm. The catalysed reaction is Exonucleolytic cleavage in either 5'- to 3'- or 3'- to 5'-direction to yield nucleoside 5'-phosphates.. Functionally, bidirectionally degrades single-stranded DNA into large acid-insoluble oligonucleotides, which are then degraded further into small acid-soluble oligonucleotides. The protein is Exodeoxyribonuclease 7 large subunit of Erwinia tasmaniensis (strain DSM 17950 / CFBP 7177 / CIP 109463 / NCPPB 4357 / Et1/99).